We begin with the raw amino-acid sequence, 335 residues long: Probable cytosolic iron-sulfur protein assembly protein Ciao1 (335 aa).

WD repeat units lie at residues 12 to 51 (GHKGRIWGVAWHPKGNVFASCGEDKAIRIWSLTGNTWSTK), 57 to 96 (GHKRTIREIRWSPCGQYLASASFDATTAIWSKSSGEFECN), 101 to 140 (GHENEVKSVSWSRSGGLLATCSRDKSVWIWEVAGDDEFEC), 146 to 185 (PHTQDVKRVVWHPTKDILASASYDNTIKMFAEEPIDNDWD), 192 to 231 (SHTSTVWGIDFDADGERLVSCSDDTTIKIWRAYHPGNTAG), 250 to 289 (QHSRAIYDVSWCKLTGLIATACGDDGIRIFKESSDSKPDE), and 301 to 335 (AHDQDVNSVQWNPVVAGQLISCSDDGTIKIWKVTE).

The protein belongs to the WD repeat CIA1 family. Conjugated to URM1, a ubiquitin-like protein.

Its function is as follows. Essential component of the cytosolic iron-sulfur (Fe/S) protein assembly machinery. Required for the maturation of extramitochondrial Fe/S proteins. The chain is Probable cytosolic iron-sulfur protein assembly protein Ciao1 from Drosophila melanogaster (Fruit fly).